Reading from the N-terminus, the 171-residue chain is Flavodoxin (171 aa).

In terms of domain architecture, Flavodoxin-like spans 4 to 165 (IGIFFGSDTG…RIKQWVKQII (162 aa)).

Belongs to the flavodoxin family. Requires FMN as cofactor.

In terms of biological role, low-potential electron donor to a number of redox enzymes. The sequence is that of Flavodoxin (fldA) from Buchnera aphidicola subsp. Acyrthosiphon pisum (strain APS) (Acyrthosiphon pisum symbiotic bacterium).